The chain runs to 763 residues: Phosphoglycerol transferase I (763 aa).

The next 4 helical transmembrane spans lie at 1 to 21 (MSEL…AWKA), 26 to 46 (WWFA…ITLY), 77 to 97 (ILPG…LGWV), and 108 to 128 (FGYS…SPAF).

It belongs to the OpgB family.

It is found in the cell inner membrane. The catalysed reaction is a phosphatidylglycerol + a membrane-derived-oligosaccharide D-glucose = a 1,2-diacyl-sn-glycerol + a membrane-derived-oligosaccharide 6-(glycerophospho)-D-glucose.. It functions in the pathway glycan metabolism; osmoregulated periplasmic glucan (OPG) biosynthesis. Transfers a phosphoglycerol residue from phosphatidylglycerol to the membrane-bound nascent glucan backbones. The protein is Phosphoglycerol transferase I of Citrobacter koseri (strain ATCC BAA-895 / CDC 4225-83 / SGSC4696).